Reading from the N-terminus, the 198-residue chain is Nucleoid occlusion factor SlmA (198 aa).

The 61-residue stretch at 10–70 (NRREEILQSL…SLIEFIEDSL (61 aa)) folds into the HTH tetR-type domain. Residues 33 to 52 (TTAKLAASVGVSEAALYRHF) constitute a DNA-binding region (H-T-H motif). A coiled-coil region spans residues 117 to 144 (EQDRLQGRINQLFERIEAQLRQVLREKR).

It belongs to the nucleoid occlusion factor SlmA family. Homodimer. Interacts with FtsZ.

The protein resides in the cytoplasm. It is found in the nucleoid. Functionally, required for nucleoid occlusion (NO) phenomenon, which prevents Z-ring formation and cell division over the nucleoid. Acts as a DNA-associated cell division inhibitor that binds simultaneously chromosomal DNA and FtsZ, and disrupts the assembly of FtsZ polymers. SlmA-DNA-binding sequences (SBS) are dispersed on non-Ter regions of the chromosome, preventing FtsZ polymerization at these regions. The protein is Nucleoid occlusion factor SlmA of Escherichia coli O127:H6 (strain E2348/69 / EPEC).